A 118-amino-acid polypeptide reads, in one-letter code: NADH-quinone oxidoreductase subunit A 1 (118 aa).

Transmembrane regions (helical) follow at residues 1-21 (MLGV…FGLA), 60-80 (FYII…MYPW), and 87-107 (LGIF…VGYI).

Belongs to the complex I subunit 3 family. As to quaternary structure, NDH-1 is composed of 14 different subunits. Subunits NuoA, H, J, K, L, M, N constitute the membrane sector of the complex.

The protein localises to the cell inner membrane. The catalysed reaction is a quinone + NADH + 5 H(+)(in) = a quinol + NAD(+) + 4 H(+)(out). In terms of biological role, NDH-1 shuttles electrons from NADH, via FMN and iron-sulfur (Fe-S) centers, to quinones in the respiratory chain. The immediate electron acceptor for the enzyme in this species is believed to be ubiquinone. Couples the redox reaction to proton translocation (for every two electrons transferred, four hydrogen ions are translocated across the cytoplasmic membrane), and thus conserves the redox energy in a proton gradient. This is NADH-quinone oxidoreductase subunit A 1 from Geobacter sulfurreducens (strain ATCC 51573 / DSM 12127 / PCA).